The following is a 222-amino-acid chain: Protein-L-isoaspartate O-methyltransferase (222 aa).

Ser-65 is a catalytic residue.

It belongs to the methyltransferase superfamily. L-isoaspartyl/D-aspartyl protein methyltransferase family.

It is found in the cytoplasm. It catalyses the reaction [protein]-L-isoaspartate + S-adenosyl-L-methionine = [protein]-L-isoaspartate alpha-methyl ester + S-adenosyl-L-homocysteine. Catalyzes the methyl esterification of L-isoaspartyl residues in peptides and proteins that result from spontaneous decomposition of normal L-aspartyl and L-asparaginyl residues. It plays a role in the repair and/or degradation of damaged proteins. This is Protein-L-isoaspartate O-methyltransferase from Chlorobium luteolum (strain DSM 273 / BCRC 81028 / 2530) (Pelodictyon luteolum).